The chain runs to 779 residues: Cell division control protein 4 (779 aa).

The segment at 39–80 (AGTHRNSSTAKTVETEDGEEDIDEYQRKRAAGSGESTPERSD) is disordered. Positions 82–85 (KRVK) match the Nuclear localization signal motif. The residue at position 104 (Ser-104) is a Phosphoserine. The F-box domain maps to 272-319 (RDLITSLPFEISLKIFNYLQFEDIINSLGVSQNWNKIIRKSTSLWKKL). WD repeat units follow at residues 380–408 (HMTS…RVYD), 420–449 (GHDG…RVWD), 461–493 (GHNS…HVWK), 528–556 (GHMA…IVWD), 568–598 (GHTD…RIWD), 630–658 (GHTA…RGWD), and 669–698 (HHTN…NIYN).

As to quaternary structure, interacts with DCD53 and SKP1. Component of the SCF(CDC4) complex containing CDC53, SKP1, RBX1 and CDC4. CDC34. Interacts with CDC6 and CIC1. Interacts with SIC1; the interaction involves a SIC1 double phosphorylated motif (degron). Homodimerizes; the dimerization increases SIC1 ubiquitination in vitro.

The protein resides in the nucleus. It participates in protein modification; protein ubiquitination. Substrate recognition component of a SCF (SKP1-CUL1-F-box protein) E3 ubiquitin-protein ligase complex which mediates the ubiquitination and subsequent proteasomal degradation of target proteins. Recognizes and binds to phosphorylated target proteins. Directs ubiquitination of the phosphorylated CDK inhibitor SIC1. Involved in the degradation of CDC6 together with CDC34/UBC3 and CDC53, and in restricting the degradation of FAR1 to the nucleus. Is essential for initiation of DNA replication and separation of the spindle pole bodies to form the poles of the mitotic spindle. It also plays a role in bud development, fusion of zygotic nuclei after conjugation and various aspects of sporulation. Required for HTA1-HTB1 locus transcription activation. Required for G1/S and G2/M transition. This Saccharomyces cerevisiae (strain ATCC 204508 / S288c) (Baker's yeast) protein is Cell division control protein 4 (CDC4).